The chain runs to 158 residues: HTH-type transcriptional repressor NicR (158 aa).

In terms of domain architecture, HTH marR-type spans 20–152; that stretch reads TEQVGHLLRK…ILYLLRKMID (133 aa). The segment at residues 66–89 is a DNA-binding region (H-T-H motif); it reads QAELIKATAVDQATIRGIVERLKA.

The protein operates within cofactor degradation; nicotinate degradation [regulation]. Its function is as follows. Transcriptional repressor for the nicCDEFTP and nicXR operons, encoding the lower aerobic nicotinate degradation pathway. Acts under non-induced conditions: repression of the nicCDEFTP and nicXR operons becomes alleviated in presence of 6-hydroxynicotinate (6HNA). This is HTH-type transcriptional repressor NicR (nicR) from Pseudomonas putida (strain ATCC 47054 / DSM 6125 / CFBP 8728 / NCIMB 11950 / KT2440).